A 614-amino-acid polypeptide reads, in one-letter code: Beta-glucosidase 33 (614 aa).

The first 26 residues, 1-26, serve as a signal peptide directing secretion; the sequence is MATATLTLFLGLLALTSTILSFNADA. Residues Gln-113, His-217, and 262–263 contribute to the a beta-D-glucoside site; that span reads NE. The active-site Proton donor is the Glu-263. A disulfide bridge connects residues Cys-282 and Cys-290. The N-linked (GlcNAc...) asparagine glycan is linked to Asn-344. Residue Tyr-407 coordinates a beta-D-glucoside. N-linked (GlcNAc...) asparagine glycosylation is found at Asn-419, Asn-432, and Asn-439. Glu-479 provides a ligand contact to a beta-D-glucoside. Glu-479 acts as the Nucleophile in catalysis. The N-linked (GlcNAc...) asparagine glycan is linked to Asn-491. Residues Trp-529, 536-537, and Phe-545 contribute to the a beta-D-glucoside site; that span reads EW.

The protein belongs to the glycosyl hydrolase 1 family.

The catalysed reaction is Hydrolysis of terminal, non-reducing beta-D-glucosyl residues with release of beta-D-glucose.. This Arabidopsis thaliana (Mouse-ear cress) protein is Beta-glucosidase 33.